Reading from the N-terminus, the 693-residue chain is Cyclin-dependent kinase G-1 (693 aa).

Residues 1–10 (MAAGSHGGYR) are compositionally biased toward gly residues. Disordered regions lie at residues 1–148 (MAAG…ARDP) and 236–308 (KKKK…DDYP). A compositionally biased stretch (basic and acidic residues) spans 13 to 24 (EVAREREHDVGV). Over residues 26 to 39 (RRSKEHYHHRHPSR) the composition is skewed to basic residues. 3 stretches are compositionally biased toward basic and acidic residues: residues 40-54 (HRDS…RSGG), 75-87 (RPSE…REPG), and 97-122 (RSGE…EEAK). Low complexity predominate over residues 268 to 284 (SVRSSSRSSDSGVLQGS). Residues 287–304 (RDLEVEKGDNIDVEKAAD) are compositionally biased toward basic and acidic residues. Positions 349 to 640 (FERLNTINEG…AEDALNHEWF (292 aa)) constitute a Protein kinase domain. Residues 355-363 (INEGTYGVV) and Lys378 contribute to the ATP site. Thr359 is modified (phosphothreonine). Phosphotyrosine is present on Tyr360. The active-site Proton acceptor is Asp473. Position 500 is a phosphoserine (Ser500). Thr506 carries the phosphothreonine modification. Residues 664–693 (RFKKHMKSPDPLEEQWMKEQGNNGDRGLFG) form a disordered region.

This sequence belongs to the protein kinase superfamily. CMGC Ser/Thr protein kinase family. CDC2/CDKX subfamily.

It catalyses the reaction L-seryl-[protein] + ATP = O-phospho-L-seryl-[protein] + ADP + H(+). It carries out the reaction L-threonyl-[protein] + ATP = O-phospho-L-threonyl-[protein] + ADP + H(+). The catalysed reaction is [DNA-directed RNA polymerase] + ATP = phospho-[DNA-directed RNA polymerase] + ADP + H(+). The chain is Cyclin-dependent kinase G-1 (CDKG-1) from Oryza sativa subsp. indica (Rice).